A 291-amino-acid chain; its full sequence is Nucleotide-binding protein LMHCC_0126 (291 aa).

13-20 (GMSGAGKT) lines the ATP pocket. 63-66 (DLRG) contacts GTP.

Belongs to the RapZ-like family.

Functionally, displays ATPase and GTPase activities. In Listeria monocytogenes serotype 4a (strain HCC23), this protein is Nucleotide-binding protein LMHCC_0126.